The following is a 482-amino-acid chain: tRNA sulfurtransferase (482 aa).

One can recognise a THUMP domain in the interval 61-165; it reads LAIRDALTRI…DDRLLLIKGR (105 aa). ATP-binding positions include 183–184, Lys265, Gly287, and Gln296; that span reads LI. Cys344 and Cys456 are oxidised to a cystine. A Rhodanese domain is found at 404 to 482; sequence FGPNDVILDI…GFENVKAYRP (79 aa). The active-site Cysteine persulfide intermediate is the Cys456.

The protein belongs to the ThiI family.

It is found in the cytoplasm. The enzyme catalyses [ThiI sulfur-carrier protein]-S-sulfanyl-L-cysteine + a uridine in tRNA + 2 reduced [2Fe-2S]-[ferredoxin] + ATP + H(+) = [ThiI sulfur-carrier protein]-L-cysteine + a 4-thiouridine in tRNA + 2 oxidized [2Fe-2S]-[ferredoxin] + AMP + diphosphate. It catalyses the reaction [ThiS sulfur-carrier protein]-C-terminal Gly-Gly-AMP + S-sulfanyl-L-cysteinyl-[cysteine desulfurase] + AH2 = [ThiS sulfur-carrier protein]-C-terminal-Gly-aminoethanethioate + L-cysteinyl-[cysteine desulfurase] + A + AMP + 2 H(+). Its pathway is cofactor biosynthesis; thiamine diphosphate biosynthesis. Functionally, catalyzes the ATP-dependent transfer of a sulfur to tRNA to produce 4-thiouridine in position 8 of tRNAs, which functions as a near-UV photosensor. Also catalyzes the transfer of sulfur to the sulfur carrier protein ThiS, forming ThiS-thiocarboxylate. This is a step in the synthesis of thiazole, in the thiamine biosynthesis pathway. The sulfur is donated as persulfide by IscS. The polypeptide is tRNA sulfurtransferase (Salmonella gallinarum (strain 287/91 / NCTC 13346)).